The chain runs to 295 residues: Indole-3-glycerol phosphate synthase (295 aa).

This sequence belongs to the TrpC family.

It catalyses the reaction 1-(2-carboxyphenylamino)-1-deoxy-D-ribulose 5-phosphate + H(+) = (1S,2R)-1-C-(indol-3-yl)glycerol 3-phosphate + CO2 + H2O. Its pathway is amino-acid biosynthesis; L-tryptophan biosynthesis; L-tryptophan from chorismate: step 4/5. The polypeptide is Indole-3-glycerol phosphate synthase (Prochlorococcus marinus (strain MIT 9301)).